Consider the following 152-residue polypeptide: Small ribosomal subunit protein uS9 (152 aa).

It belongs to the universal ribosomal protein uS9 family.

The sequence is that of Small ribosomal subunit protein uS9 from Mycobacterium ulcerans (strain Agy99).